A 372-amino-acid chain; its full sequence is Probable peptidoglycan glycosyltransferase FtsW (372 aa).

Topologically, residues 1–12 are cytoplasmic; it reads MQKKSTISWSYD. The chain crosses the membrane as a helical span at residues 13–33; that stretch reads AWIVICTLSLLALGLLMVASA. Topologically, residues 34 to 45 are periplasmic; that stretch reads SMVISDRQFGYP. Residues 46–66 traverse the membrane as a helical segment; sequence FHYFIRHLIYLSLGLTLAWVA. Residues 67-77 are Cytoplasmic-facing; it reads SRVPIKVWKTY. The chain crosses the membrane as a helical span at residues 78-98; the sequence is SGYLFLVGFLLLILVLAPVIG. The Periplasmic portion of the chain corresponds to 99-109; the sequence is KTVNGSRRWIQ. The helical transmembrane segment at 110–130 threads the bilayer; the sequence is LGFISLQVSEVVKFVTILYLA. Over 131–142 the chain is Cytoplasmic; the sequence is SFLQRYQSEVQK. A helical membrane pass occupies residues 143-163; it reads ELKGFLKPMLLVGILSGLLLL. The Periplasmic portion of the chain corresponds to 164–165; that stretch reads EP. The chain crosses the membrane as a helical span at residues 166 to 186; it reads DFGAAVVITMTCLALLFLAGV. A topological domain (cytoplasmic) is located at residue R187. Residues 188 to 208 form a helical membrane-spanning segment; it reads LWPFCVLLVLVAGSLILLAIL. Topologically, residues 209 to 277 are periplasmic; the sequence is SPYRLQRLTS…LFAVLAEELG (69 aa). The helical transmembrane segment at 278-298 threads the bilayer; it reads LIGEILLMGLFVLLIGRIILI. Residues 299-315 are Cytoplasmic-facing; the sequence is GRRAENSNQLYSAYLAY. A helical membrane pass occupies residues 316–336; the sequence is GIALWLGLQVIINIGVTAGVL. The Periplasmic portion of the chain corresponds to 337-342; that stretch reads PTKGLT. A helical transmembrane segment spans residues 343-363; it reads LPFISYGGSSLLMNCLAIGVI. Residues 364–372 are Cytoplasmic-facing; it reads LRIAYETEN.

This sequence belongs to the SEDS family. FtsW subfamily.

Its subcellular location is the cell inner membrane. It catalyses the reaction [GlcNAc-(1-&gt;4)-Mur2Ac(oyl-L-Ala-gamma-D-Glu-L-Lys-D-Ala-D-Ala)](n)-di-trans,octa-cis-undecaprenyl diphosphate + beta-D-GlcNAc-(1-&gt;4)-Mur2Ac(oyl-L-Ala-gamma-D-Glu-L-Lys-D-Ala-D-Ala)-di-trans,octa-cis-undecaprenyl diphosphate = [GlcNAc-(1-&gt;4)-Mur2Ac(oyl-L-Ala-gamma-D-Glu-L-Lys-D-Ala-D-Ala)](n+1)-di-trans,octa-cis-undecaprenyl diphosphate + di-trans,octa-cis-undecaprenyl diphosphate + H(+). It participates in cell wall biogenesis; peptidoglycan biosynthesis. Peptidoglycan polymerase that is essential for cell division. This Coxiella burnetii (strain RSA 493 / Nine Mile phase I) protein is Probable peptidoglycan glycosyltransferase FtsW.